The primary structure comprises 258 residues: UPF0246 protein mma_1385 (258 aa).

Belongs to the UPF0246 family.

This is UPF0246 protein mma_1385 from Janthinobacterium sp. (strain Marseille) (Minibacterium massiliensis).